A 211-amino-acid polypeptide reads, in one-letter code: 2,3-bisphosphoglycerate-dependent phosphoglycerate mutase (211 aa).

Residues 9–16 (RHGQSDWN), 22–23 (TG), Arg-61, 88–91 (ERDY), Lys-99, 115–116 (RR), and 159–160 (GN) each bind substrate. His-10 (tele-phosphohistidine intermediate) is an active-site residue. Glu-88 serves as the catalytic Proton donor/acceptor.

Belongs to the phosphoglycerate mutase family. BPG-dependent PGAM subfamily. Homodimer.

The enzyme catalyses (2R)-2-phosphoglycerate = (2R)-3-phosphoglycerate. It functions in the pathway carbohydrate degradation; glycolysis; pyruvate from D-glyceraldehyde 3-phosphate: step 3/5. In terms of biological role, catalyzes the interconversion of 2-phosphoglycerate and 3-phosphoglycerate. The sequence is that of 2,3-bisphosphoglycerate-dependent phosphoglycerate mutase from Rhizobium etli (strain CIAT 652).